The sequence spans 412 residues: Multifunctional CCA protein (412 aa).

G8 and R11 together coordinate ATP. 2 residues coordinate CTP: G8 and R11. 2 residues coordinate Mg(2+): D21 and D23. ATP is bound by residues R91, R137, and R140. 3 residues coordinate CTP: R91, R137, and R140. An HD domain is found at 228-329 (TGIHTLMTLS…VKLFDSIDAW (102 aa)).

Belongs to the tRNA nucleotidyltransferase/poly(A) polymerase family. Bacterial CCA-adding enzyme type 1 subfamily. As to quaternary structure, monomer. Can also form homodimers and oligomers. Mg(2+) serves as cofactor. Requires Ni(2+) as cofactor.

It catalyses the reaction a tRNA precursor + 2 CTP + ATP = a tRNA with a 3' CCA end + 3 diphosphate. The catalysed reaction is a tRNA with a 3' CCA end + 2 CTP + ATP = a tRNA with a 3' CCACCA end + 3 diphosphate. Catalyzes the addition and repair of the essential 3'-terminal CCA sequence in tRNAs without using a nucleic acid template. Adds these three nucleotides in the order of C, C, and A to the tRNA nucleotide-73, using CTP and ATP as substrates and producing inorganic pyrophosphate. tRNA 3'-terminal CCA addition is required both for tRNA processing and repair. Also involved in tRNA surveillance by mediating tandem CCA addition to generate a CCACCA at the 3' terminus of unstable tRNAs. While stable tRNAs receive only 3'-terminal CCA, unstable tRNAs are marked with CCACCA and rapidly degraded. The polypeptide is Multifunctional CCA protein (Shigella flexneri serotype 5b (strain 8401)).